The primary structure comprises 104 residues: Ribonuclease P protein component 4 (104 aa).

Positions 63, 66, 89, and 92 each coordinate Zn(2+).

Belongs to the eukaryotic/archaeal RNase P protein component 4 family. In terms of assembly, consists of a catalytic RNA component and at least 4-5 protein subunits. It depends on Zn(2+) as a cofactor.

The protein localises to the cytoplasm. It carries out the reaction Endonucleolytic cleavage of RNA, removing 5'-extranucleotides from tRNA precursor.. Functionally, part of ribonuclease P, a protein complex that generates mature tRNA molecules by cleaving their 5'-ends. This Methanoregula boonei (strain DSM 21154 / JCM 14090 / 6A8) protein is Ribonuclease P protein component 4.